Reading from the N-terminus, the 852-residue chain is Lon protease homolog 2, peroxisomal (852 aa).

N-acetylserine is present on Ser2. The region spanning 13–222 (LPLLLTHESV…MTIPLLVRQI (210 aa)) is the Lon N-terminal domain. ATP is bound at residue 375–382 (GPPGVGKT). In terms of domain architecture, Lon proteolytic spans 651 to 837 (LSQPGVAIGL…DEVLNAAFDG (187 aa)). Residues Ser743 and Lys786 contribute to the active site. Residues 850 to 852 (SKL) carry the Microbody targeting signal motif.

The protein belongs to the peptidase S16 family. Interacts with PEX5. Interacts with TYSND1. May interact with enzymes involved in beta-oxidation of fatty acids, including ACOX1/AOX.

It localises to the peroxisome matrix. It carries out the reaction Hydrolysis of proteins in presence of ATP.. ATP-dependent serine protease that mediates the selective degradation of misfolded and unassembled polypeptides in the peroxisomal matrix. Necessary for type 2 peroxisome targeting signal (PTS2)-containing protein processing and facilitates peroxisome matrix protein import. May indirectly regulate peroxisomal fatty acid beta-oxidation through degradation of the self-processed forms of TYSND1. The chain is Lon protease homolog 2, peroxisomal (Lonp2) from Rattus norvegicus (Rat).